The sequence spans 669 residues: Protein adenylyltransferase SelO, mitochondrial (669 aa).

A mitochondrion-targeting transit peptide spans 1 to 115; the sequence is MAVYRAALGA…LGLGAPPARE (115 aa). ATP is bound by residues Gly-153, Gly-155, Lys-176, Asp-188, Gly-189, Arg-246, and Arg-253. Asp-338 acts as the Proton acceptor in catalysis. Mg(2+) is bound by residues Asn-339 and Asp-348. Residue Asp-348 participates in ATP binding. The interval 634–654 is disordered; the sequence is ATDAEATEADGADGRQRSYSS. A Phosphothreonine modification is found at Thr-635. The residue at position 653 (Ser-653) is a Phosphoserine. Position 667 (Sec-667) is a non-standard amino acid, selenocysteine.

The protein belongs to the SELO family. Requires Mg(2+) as cofactor.

Its subcellular location is the mitochondrion. The catalysed reaction is L-tyrosyl-[protein] + ATP = O-(5'-adenylyl)-L-tyrosyl-[protein] + diphosphate. It carries out the reaction L-threonyl-[protein] + ATP = 3-O-(5'-adenylyl)-L-threonyl-[protein] + diphosphate. It catalyses the reaction L-seryl-[protein] + ATP = 3-O-(5'-adenylyl)-L-seryl-[protein] + diphosphate. Its function is as follows. Catalyzes the transfer of adenosine 5'-monophosphate (AMP) to Ser, Thr and Tyr residues of target proteins (AMPylation). May be a redox-active mitochondrial selenoprotein which interacts with a redox target protein. This is Protein adenylyltransferase SelO, mitochondrial from Homo sapiens (Human).